The following is a 233-amino-acid chain: 2-C-methyl-D-erythritol 4-phosphate cytidylyltransferase (233 aa).

The protein belongs to the IspD/TarI cytidylyltransferase family. IspD subfamily.

It carries out the reaction 2-C-methyl-D-erythritol 4-phosphate + CTP + H(+) = 4-CDP-2-C-methyl-D-erythritol + diphosphate. The protein operates within isoprenoid biosynthesis; isopentenyl diphosphate biosynthesis via DXP pathway; isopentenyl diphosphate from 1-deoxy-D-xylulose 5-phosphate: step 2/6. Functionally, catalyzes the formation of 4-diphosphocytidyl-2-C-methyl-D-erythritol from CTP and 2-C-methyl-D-erythritol 4-phosphate (MEP). The sequence is that of 2-C-methyl-D-erythritol 4-phosphate cytidylyltransferase from Gloeobacter violaceus (strain ATCC 29082 / PCC 7421).